Consider the following 373-residue polypeptide: MTRMQQRTLMVMAGGTGGHVFPGLAVAHLMQAWGWRVVWLGNPNGMEATLVPKHGIPMEYVQFGGLRGKGMKTKLMLPVNLLRACMQSLSVLRRVKPDVVLGMGGYITFPAGMMTALSGTPLVLHEQNSIAGLANKVLAKLAKRVLVAFPKALPHAEWTGNPIREELARTTAPRQRYAARSGPLNVLVVGGSLGASALNEVVPRALAKLAPHERPRIVHQAGAKHIDALRANYEAAGIAAGDGAQLVPFIDDMTSAYANADLVICRSGAMTVAEIAAVGVAAFFVPFPYAVDDHQTTNAAFLADNGAALLVQQRDLSADALADWLRSQTRASLAEMAERSRSLAKPDATEQVAQICATVAGVTPSLSPEGKQQ.

Residues Thr-16–Gly-18, Asn-128, Arg-164, Ser-192, Ile-250, and Gln-295 each bind UDP-N-acetyl-alpha-D-glucosamine.

It belongs to the glycosyltransferase 28 family. MurG subfamily.

Its subcellular location is the cell inner membrane. The enzyme catalyses di-trans,octa-cis-undecaprenyl diphospho-N-acetyl-alpha-D-muramoyl-L-alanyl-D-glutamyl-meso-2,6-diaminopimeloyl-D-alanyl-D-alanine + UDP-N-acetyl-alpha-D-glucosamine = di-trans,octa-cis-undecaprenyl diphospho-[N-acetyl-alpha-D-glucosaminyl-(1-&gt;4)]-N-acetyl-alpha-D-muramoyl-L-alanyl-D-glutamyl-meso-2,6-diaminopimeloyl-D-alanyl-D-alanine + UDP + H(+). Its pathway is cell wall biogenesis; peptidoglycan biosynthesis. Functionally, cell wall formation. Catalyzes the transfer of a GlcNAc subunit on undecaprenyl-pyrophosphoryl-MurNAc-pentapeptide (lipid intermediate I) to form undecaprenyl-pyrophosphoryl-MurNAc-(pentapeptide)GlcNAc (lipid intermediate II). The polypeptide is UDP-N-acetylglucosamine--N-acetylmuramyl-(pentapeptide) pyrophosphoryl-undecaprenol N-acetylglucosamine transferase (Paraburkholderia phymatum (strain DSM 17167 / CIP 108236 / LMG 21445 / STM815) (Burkholderia phymatum)).